Here is a 254-residue protein sequence, read N- to C-terminus: Homeobox protein Dlx4b (254 aa).

The homeobox DNA-binding region spans 129–188 (IRKPRTIYSSVQLQALHQRFQQTQYLALPERADLAAKLGLTQTQVKIWFQNKRSKYKKIM).

It belongs to the distal-less homeobox family.

Its subcellular location is the nucleus. Functionally, during larvae development, may be important for neurocranium morphogenesis. This Danio rerio (Zebrafish) protein is Homeobox protein Dlx4b (dlx4b).